Reading from the N-terminus, the 354-residue chain is MGCTLSAEDKAAVERSKMIDRNLREDGEKAAREVKLLLLGAGESGKSTIVKQMKIIHEAGYSEEECKQYKAVVYSNTIQSIIAIIRAMGRLKIDFGDSARADDARQLFVLAGAAEEGFMTAELAGVIKRLWKDSGVQACFNRSREYQLNDSAAYYLNDLDRIAQSNYIPTQQDVLRTRVKTTGIVETHFTFKDLHFKMFDVGGQRSERKKWIHCFEGVTAIIFCVALSDYDLVLAEDEEMNRMHESMKLFDSICNNKWFTDTSIILFLNKKDLFEEKIKKSPLTICYPEYTGSNTYEEAAAYIQCQFEDLNKRKDTKEIYTHFTCATDTKNVQFVFDAVTDVIIKNNLKDCGLF.

G2 is lipidated: N-myristoyl glycine. C3 carries S-palmitoyl cysteine lipidation. Residues 32–354 enclose the G-alpha domain; the sequence is REVKLLLLGA…KNNLKDCGLF (323 aa). The tract at residues 35 to 48 is G1 motif; the sequence is KLLLLGAGESGKST. GTP is bound by residues 43-48, 150-151, and 175-178; these read ESGKST, DS, and LRTR. Residue S47 coordinates Mg(2+). A G2 motif region spans residues 173 to 181; sequence DVLRTRVKT. T181 provides a ligand contact to Mg(2+). Residues 196-205 form a G3 motif region; that stretch reads FKMFDVGGQR. GTP is bound by residues 200–204, 269–272, and A326; these read DVGGQ and NKKD. Residues 265–272 are G4 motif; the sequence is ILFLNKKD. Positions 324–329 are G5 motif; that stretch reads TCATDT.

It belongs to the G-alpha family. G(i/o/t/z) subfamily. As to quaternary structure, heterotrimeric G proteins are composed of 3 units; alpha, beta and gamma. The alpha chain contains the guanine nucleotide binding site. Part of a spindle orientation complex at least composed of GNAI1, GPSM2 and NUMA1. Identified in complex with the beta subunit GNB1 and the gamma subunit GNG1. Identified in complex with the beta subunit GNB1 and the gamma subunit GNG2. Component of the TAS2R14-GNAI1 complex, consisting of TAS2R14, GNAI1, GNB1 and GNG2; within the complex interacts with TAS2R14; this complex plays a role in the perception of bitterness. GTP binding causes dissociation of the heterotrimer, liberating the individual subunits so that they can interact with downstream effector proteins. Interacts (GDP-bound form) with GPSM1; this inhibits guanine nucleotide exchange and GTP binding. Interacts (GDP-bound form) with GPSM2 (via GoLoco domains); this inhibits guanine nucleotide exchange. Interacts with RGS10; this strongly enhances GTP hydrolysis. Interacts with RGS1 and RGS16; this strongly enhances GTPase activity. Interacts with RGS4. Interacts with RGS12. Interacts (via active GTP- or inactive GDP-bound forms) with RGS14 (via RGS and GoLoco domains). Interacts with RGS3, RGS6, RGS7, RGS8, RGS17, RGS18 and RGS20 (in vitro). Interacts (GDP-bound form) with RIC8A (via C-terminus); promoting GNAI1 folding and association with the plasma membrane. Interacts (inactive GDP-bound form) with NUCB1 (via GBA motif); the interaction leads to activation of GNAI1. Interacts (inactive GDP-bound form) with CCDC88C/DAPLE (via GBA motif); the interaction leads to activation of GNAI1. Interacts (inactive GDP-bound form) with CCDC8A/GIV (via GBA motif). Post-translationally, myristoylation at Gly-2 is required for membrane anchoring before palmitoylation. In terms of processing, palmitoylation at Cys-3 varies with membrane lipid composition. In terms of tissue distribution, mainly expressed in the brain, lung and kidney.

The protein localises to the nucleus. Its subcellular location is the cytoplasm. It localises to the cell membrane. It is found in the cytoskeleton. The protein resides in the microtubule organizing center. The protein localises to the centrosome. Its subcellular location is the cell cortex. It localises to the membrane. It catalyses the reaction GTP + H2O = GDP + phosphate + H(+). In terms of biological role, guanine nucleotide-binding proteins (G proteins) function as transducers downstream of G protein-coupled receptors (GPCRs) in numerous signaling cascades. The alpha chain contains the guanine nucleotide binding site and alternates between an active, GTP-bound state and an inactive, GDP-bound state. Signaling by an activated GPCR promotes GDP release and GTP binding. The alpha subunit has a low GTPase activity that converts bound GTP to GDP, thereby terminating the signal. Both GDP release and GTP hydrolysis are modulated by numerous regulatory proteins. Signaling is mediated via effector proteins, such as adenylate cyclase. Inhibits adenylate cyclase activity of ADCY1, ADCY5 and ADCY6, leading to decreased intracellular cAMP levels. The inactive GDP-bound form prevents the association of RGS14 with centrosomes and is required for the translocation of RGS14 from the cytoplasm to the plasma membrane. Required for normal cytokinesis during mitosis. Required for cortical dynein-dynactin complex recruitment during metaphase. The sequence is that of Guanine nucleotide-binding protein G(i) subunit alpha-1 (GNAI1) from Cavia porcellus (Guinea pig).